Here is a 303-residue protein sequence, read N- to C-terminus: Guanosine-inosine kinase (303 aa).

The protein belongs to the carbohydrate kinase PfkB family. Homodimer. The cofactor is Mg(2+).

It catalyses the reaction guanosine + ATP = GMP + ADP + H(+). The enzyme catalyses inosine + ATP = IMP + ADP + H(+). It functions in the pathway purine metabolism; IMP biosynthesis via salvage pathway; IMP from inosine: step 1/1. The protein operates within purine metabolism; GMP biosynthesis via salvage pathway. With respect to regulation, kinase activity is stimulated by pyrimidine nucleotides, especially CMP and CTP, and inhibited by AMP, ADP and GMP. Activity is stimulated by potassium or ammonium ions. Functionally, catalyzes the phosphorylation of guanosine and inosine to GMP and IMP, respectively. Can also use deoxyguanosine. Shows a strong preference for guanosine. dATP, GTP and dGTP can serve as phosphate donors. The chain is Guanosine-inosine kinase from Exiguobacterium acetylicum (Brevibacterium acetylicum).